We begin with the raw amino-acid sequence, 1270 residues long: ATP-dependent helicase/nuclease subunit A (1270 aa).

The 474-residue stretch at 3–476 (TKWTEEQELA…IMLYKNFRSR (474 aa)) folds into the UvrD-like helicase ATP-binding domain. ATP is bound at residue 24 to 31 (AAAGSGKT). In terms of domain architecture, UvrD-like helicase C-terminal spans 528 to 823 (IENLKVAGDI…RIMSIHKSKG (296 aa)).

Belongs to the helicase family. AddA subfamily. As to quaternary structure, heterodimer of AddA and AddB/RexB. It depends on Mg(2+) as a cofactor.

It catalyses the reaction Couples ATP hydrolysis with the unwinding of duplex DNA by translocating in the 3'-5' direction.. The catalysed reaction is ATP + H2O = ADP + phosphate + H(+). Its function is as follows. The heterodimer acts as both an ATP-dependent DNA helicase and an ATP-dependent, dual-direction single-stranded exonuclease. Recognizes the chi site generating a DNA molecule suitable for the initiation of homologous recombination. The AddA nuclease domain is required for chi fragment generation; this subunit has the helicase and 3' -&gt; 5' nuclease activities. The sequence is that of ATP-dependent helicase/nuclease subunit A from Clostridium perfringens (strain SM101 / Type A).